The sequence spans 559 residues: Glucose-6-phosphate isomerase (559 aa).

Residue glutamate 363 is the Proton donor of the active site. Catalysis depends on residues histidine 394 and lysine 523.

The protein belongs to the GPI family.

It is found in the cytoplasm. It carries out the reaction alpha-D-glucose 6-phosphate = beta-D-fructose 6-phosphate. Its pathway is carbohydrate biosynthesis; gluconeogenesis. It participates in carbohydrate degradation; glycolysis; D-glyceraldehyde 3-phosphate and glycerone phosphate from D-glucose: step 2/4. Its function is as follows. Catalyzes the reversible isomerization of glucose-6-phosphate to fructose-6-phosphate. The polypeptide is Glucose-6-phosphate isomerase (Bartonella quintana (strain Toulouse) (Rochalimaea quintana)).